The following is a 347-amino-acid chain: Beta-hexosaminidase (347 aa).

Substrate contacts are provided by residues aspartate 64, arginine 72, arginine 138, and 168–169 (KH). Histidine 181 (proton donor/acceptor) is an active-site residue. Aspartate 251 acts as the Nucleophile in catalysis.

It belongs to the glycosyl hydrolase 3 family. NagZ subfamily.

It is found in the cytoplasm. The enzyme catalyses Hydrolysis of terminal non-reducing N-acetyl-D-hexosamine residues in N-acetyl-beta-D-hexosaminides.. It participates in cell wall biogenesis; peptidoglycan recycling. In terms of biological role, plays a role in peptidoglycan recycling by cleaving the terminal beta-1,4-linked N-acetylglucosamine (GlcNAc) from peptide-linked peptidoglycan fragments, giving rise to free GlcNAc, anhydro-N-acetylmuramic acid and anhydro-N-acetylmuramic acid-linked peptides. This is Beta-hexosaminidase from Thioalkalivibrio sulfidiphilus (strain HL-EbGR7).